A 1397-amino-acid polypeptide reads, in one-letter code: Centlein (1397 aa).

Disordered stretches follow at residues 1–43 (MAAR…GLAG) and 56–76 (LWRG…GAAV). A2 is subject to N-acetylalanine. A phosphoserine mark is found at S5, S9, and S22. 2 coiled-coil regions span residues 95-126 (EEAK…KEFV) and 405-481 (VVNL…KLMA). 2 disordered regions span residues 422–449 (LKEK…SGKA) and 485–521 (CDQD…SEEL). The span at 485–503 (CDQDFSEKGTEGKHKEPPV) shows a compositional bias: basic and acidic residues. Coiled-coil stretches lie at residues 674–778 (KNEK…KALR), 973–1114 (ISLR…MELL), and 1152–1299 (SESN…LKKM). Phosphoserine is present on S1219. T1334 carries the phosphothreonine modification.

As to quaternary structure, interacts with CEP250 and CEP68. Interacts with NEK2; the interaction leads to phosphorylation of CNTLN. Phosphorylated directly or indirectly by NEK2.

It is found in the cytoplasm. The protein resides in the cytoskeleton. The protein localises to the microtubule organizing center. Its subcellular location is the centrosome. It localises to the centriole. Functionally, required for centrosome cohesion and recruitment of CEP68 to centrosomes. This Mus musculus (Mouse) protein is Centlein.